The following is a 208-amino-acid chain: MARNINPKCRQCRREGEKLFLKGDKCFSDKCPIERRNYPPGQHGQKKVRLSDYAVQLREKQKIRRIYGLLENQFRNVYKRADKQKGVTGDNLLQLLESRLDNVAYNMGFGSSRSEARQIVRHNCVLLNGKRANIPSHLVEPGDLIEIAEHAKSYLRIKASIEAAKRRSIPSWLEVDFDNLKGLYKSKPERSDLSSTINESLVVELYSK.

Positions 98–159 (SRLDNVAYNM…HAKSYLRIKA (62 aa)) constitute an S4 RNA-binding domain.

This sequence belongs to the universal ribosomal protein uS4 family. Part of the 30S ribosomal subunit. Contacts protein S5. The interaction surface between S4 and S5 is involved in control of translational fidelity.

Functionally, one of the primary rRNA binding proteins, it binds directly to 16S rRNA where it nucleates assembly of the body of the 30S subunit. With S5 and S12 plays an important role in translational accuracy. The chain is Small ribosomal subunit protein uS4A (rpsD1) from Nitrosomonas europaea (strain ATCC 19718 / CIP 103999 / KCTC 2705 / NBRC 14298).